The sequence spans 298 residues: Peroxisomal 2,4-dienoyl-CoA reductase [(3E)-enoyl-CoA-producing] (298 aa).

19–24 contacts NADP(+); that stretch reads GGGSGI. R44 is a substrate binding site. D69 serves as a coordination point for NADP(+). Substrate-binding positions include R71, F101, and 109–111; that span reads SPN. NADP(+) is bound by residues K173 and 200-206; that span reads PGPIGGT. The interval 279–298 is disordered; sequence SRAVEKRSRAKPVGLPTSKL. Residues 296-298 carry the Microbody targeting signal motif; the sequence is SKL.

Belongs to the short-chain dehydrogenases/reductases (SDR) family. 2,4-dienoyl-CoA reductase subfamily.

The protein localises to the peroxisome. It catalyses the reaction a (2E,4Z)-dienoyl-CoA + NADPH + H(+) = a 4,5-saturated-(3E)-enoyl-CoA + NADP(+). The enzyme catalyses a (2E,4E)-dienoyl-CoA + NADPH + H(+) = a 4,5-saturated-(3E)-enoyl-CoA + NADP(+). In terms of biological role, auxiliary enzyme of beta-oxidation. Participates in the degradation of unsaturated fatty enoyl-CoA esters having double bonds in both even- and odd-numbered positions in peroxisome. Catalyzes the NADP-dependent reduction of 2,4-dienoyl-CoA to yield trans-3-enoyl-CoA. This chain is Peroxisomal 2,4-dienoyl-CoA reductase [(3E)-enoyl-CoA-producing], found in Arabidopsis thaliana (Mouse-ear cress).